The primary structure comprises 142 residues: Large ribosomal subunit protein uL11 (142 aa).

This sequence belongs to the universal ribosomal protein uL11 family. In terms of assembly, part of the ribosomal stalk of the 50S ribosomal subunit. Interacts with L10 and the large rRNA to form the base of the stalk. L10 forms an elongated spine to which L12 dimers bind in a sequential fashion forming a multimeric L10(L12)X complex. One or more lysine residues are methylated.

Forms part of the ribosomal stalk which helps the ribosome interact with GTP-bound translation factors. In Aliivibrio fischeri (strain MJ11) (Vibrio fischeri), this protein is Large ribosomal subunit protein uL11.